Reading from the N-terminus, the 582-residue chain is Heterogeneous nuclear ribonucleoprotein C homolog (582 aa).

Residues 1-21 (MSEALETGDPSPPPPIVSENG) form a disordered region. C2H2-type zinc fingers lie at residues 102-125 (YYCCLCNRPYKTHATLTAHLRGYH), 130-154 (SSCDEPGCNFLSFTDQEKKRHRRTH), and 213-235 (YACLKCPHSVFNAYHAARHVEMH).

It localises to the nucleus. The polypeptide is Heterogeneous nuclear ribonucleoprotein C homolog (Caenorhabditis elegans).